The following is a 272-amino-acid chain: MSCHNCSDPQVLCSSGQLFLQPLWDHLRSWEALLQSPFFPVIFSITTYVGFCLPFVVLDILCSWVPALRRYKIHPDFSPSAQQLLPCLGQTLYQHVMFVFPVTLLHWARSPALLPHEAPELLLLLHHILFCLLLFDMEFFVWHLLHHKVPWLYRTFHKVHHQNSSSFALATQYMSVWELFSLGFFDMMNVTLLGCHPLTTLTFHVVNIWLSVEDHSGYNFPWSTHRLVPFGWYGGVVHHDLHHSHFNCNFAPYFTHWDKILGTLRTASVPAR.

N-linked (GlcNAc...) asparagine glycosylation occurs at Asn-5. Transmembrane regions (helical) follow at residues 38–58 (FFPVIFSITTYVGFCLPFVVL), 84–104 (LLPCLGQTLYQHVMFVFPVTL), and 121–141 (LLLLLHHILFCLLLFDMEFFV). The Fatty acid hydroxylase domain maps to 129 to 263 (LFCLLLFDME…FTHWDKILGT (135 aa)). A Histidine box-1 motif is present at residues 142-146 (WHLLH). The Histidine box-2 motif lies at 157–161 (HKVHH). 2 N-linked (GlcNAc...) asparagine glycosylation sites follow: Asn-163 and Asn-189. Residues 238-244 (HHDLHHS) carry the Histidine box-3 motif.

The protein belongs to the sterol desaturase family. The cofactor is Fe cation. Post-translationally, N-glycosylated.

The protein localises to the endoplasmic reticulum membrane. The catalysed reaction is cholesterol + AH2 + O2 = 25-hydroxycholesterol + A + H2O. It catalyses the reaction cholesterol + NADPH + O2 + H(+) = 25-hydroxycholesterol + NADP(+) + H2O. In terms of biological role, catalyzes the formation of 25-hydroxycholesterol from cholesterol, leading to repress cholesterol biosynthetic enzymes. Plays a key role in cell positioning and movement in lymphoid tissues: 25-hydroxycholesterol is an intermediate in biosynthesis of 7-alpha,25-dihydroxycholesterol (7-alpha,25-OHC), an oxysterol that acts as a ligand for the G protein-coupled receptor GPR183/EBI2, a chemotactic receptor for a number of lymphoid cells. May play an important role in regulating lipid metabolism by synthesizing a corepressor that blocks sterol regulatory element binding protein (SREBP) processing. As an interferon-stimulated gene, has broad antiviral activities against a wide range of enveloped viruses, such as vesicular stomatitis virus (VSV) and SARS coronavirus-2 (SARS-CoV-2). Its product, 25-hydroxycholesterol, activates the ER-localized enzyme ACAT to induce internalization of accessible cholesterol on the plasma membrane and restricts SARS-CoV-2 S protein-mediated fusion which inhibits virus replication. In testis, production of 25-hydroxycholesterol by macrophages plays a role in Leydig cell differentiation. Required to restrain inflammation in macrophages: production of 25-hydroxycholesterol protects macrophages from cholesterol overload, thereby preventing mitochondrial DNA release and subsequent activation of the AIM2 inflammasome. This Homo sapiens (Human) protein is Cholesterol 25-hydroxylase.